Here is a 274-residue protein sequence, read N- to C-terminus: MTAFWGEVIGTMLLIIFGAGVCAGVNLKKSLSFQSGWIVVVFGWGLGVAMAAYAVGGISGAHLNPALTIALAFVGDFPWKEVPVYIAAQMIGAIIGAVIIYLHYLPHWKSTDDPAAKLGVFSTGPSIPHTFANVLSEVIGTFVLVLGILAIGANQFTEGLNPLIVGFLIVAIGISLGGTTGYAINPARDLGPRIAHAFLPIPGKGSSNWKYAWVPVVGPILGGSFGGVFYNAAFKGHITSSFWIVSVILVVVLLGLYVYTKSHSAKTLSNSKYI.

2 helical membrane-spanning segments follow: residues 3 to 23 (AFWGEVIGTMLLIIFGAGVCA) and 38 to 58 (IVVVFGWGLGVAMAAYAVGGI). Positions 64–66 (NPA) match the NPA 1 motif. The next 3 helical transmembrane spans lie at 82 to 102 (VPVYIAAQMIGAIIGAVIIYL), 131 to 151 (FANVLSEVIGTFVLVLGILAI), and 164 to 184 (IVGFLIVAIGISLGGTTGYAI). An NPA 2 motif is present at residues 185–187 (NPA). A helical membrane pass occupies residues 238 to 258 (ITSSFWIVSVILVVVLLGLYV).

The protein belongs to the MIP/aquaporin (TC 1.A.8) family.

It localises to the cell membrane. It carries out the reaction glycerol(in) = glycerol(out). Functionally, mediates glycerol diffusion across the cytoplasmic membrane via a pore-type mechanism. This is Glycerol uptake facilitator protein (glpF) from Bacillus subtilis (strain 168).